Reading from the N-terminus, the 230-residue chain is Large ribosomal subunit protein uL1 (230 aa).

Belongs to the universal ribosomal protein uL1 family. In terms of assembly, part of the 50S ribosomal subunit.

Binds directly to 23S rRNA. The L1 stalk is quite mobile in the ribosome, and is involved in E site tRNA release. In terms of biological role, protein L1 is also a translational repressor protein, it controls the translation of the L11 operon by binding to its mRNA. In Ruminiclostridium cellulolyticum (strain ATCC 35319 / DSM 5812 / JCM 6584 / H10) (Clostridium cellulolyticum), this protein is Large ribosomal subunit protein uL1.